The sequence spans 163 residues: Phosphopantetheine adenylyltransferase (163 aa).

A substrate-binding site is contributed by S9. ATP-binding positions include 9 to 10 (SF) and H17. Residues K41, I75, and R89 each contribute to the substrate site. ATP is bound by residues 90 to 92 (GIR), E100, and 125 to 131 (HLYVRSD).

This sequence belongs to the bacterial CoaD family. In terms of assembly, homohexamer. It depends on Mg(2+) as a cofactor.

It localises to the cytoplasm. The enzyme catalyses (R)-4'-phosphopantetheine + ATP + H(+) = 3'-dephospho-CoA + diphosphate. Its pathway is cofactor biosynthesis; coenzyme A biosynthesis; CoA from (R)-pantothenate: step 4/5. In terms of biological role, reversibly transfers an adenylyl group from ATP to 4'-phosphopantetheine, yielding dephospho-CoA (dPCoA) and pyrophosphate. The polypeptide is Phosphopantetheine adenylyltransferase (Borreliella burgdorferi (strain ZS7) (Borrelia burgdorferi)).